A 524-amino-acid chain; its full sequence is 12S seed storage protein CRC (524 aa).

A signal peptide spans 1 to 23; that stretch reads MVKLSNLLVATFGVLLVLNGCLA. C37 and C70 form a disulfide bridge. Cupin type-1 domains are found at residues 42 to 289 and 346 to 495; these read LDVL…QLAQ and ENID…EEAR. Position 53 is a phosphoserine (S53). Phosphotyrosine is present on Y78. S97 carries the phosphoserine modification. C113 and C340 are joined by a disulfide. Position 116 is a phosphothreonine (T116). The segment at 119–190 is disordered; it reads DSQPMQGQQQ…QGQQGQQGFR (72 aa). Over residues 124–188 the composition is skewed to low complexity; it reads QGQQQGQPWQ…EGQGQQGQQG (65 aa). 2 positions are modified to phosphoserine: S259 and S366. Phosphothreonine is present on T459. At S484 the chain carries Phosphoserine. T501 bears the Phosphothreonine mark.

This sequence belongs to the 11S seed storage protein (globulins) family. As to quaternary structure, hexamer; each subunit is composed of an acidic and a basic chain derived from a single precursor and linked by a disulfide bond. Post-translationally, proteolytically processed during seed maturation at a conserved Asn-Gly peptide bond by an asparaginyl endopeptidase to produce two mature polypeptides referred to as alpha and beta subunits that are joined together by a disulfide bond. Phosphorylated in seeds on some Tyr residues in response to abscisic acid (ABA). Accumulates in seeds 8 days after anthesis.

The protein resides in the protein storage vacuole. In terms of biological role, seed storage protein. This chain is 12S seed storage protein CRC (CRC), found in Arabidopsis thaliana (Mouse-ear cress).